The primary structure comprises 569 residues: Urease subunit alpha (569 aa).

Residues 131–569 (GGIDSHIHFI…LPLAQRYFLF (439 aa)) form the Urease domain. Ni(2+) contacts are provided by His-136, His-138, and Lys-219. Lys-219 carries the post-translational modification N6-carboxylysine. Position 221 (His-221) interacts with substrate. Residues His-248 and His-274 each coordinate Ni(2+). His-322 (proton donor) is an active-site residue. Asp-362 is a binding site for Ni(2+).

Belongs to the metallo-dependent hydrolases superfamily. Urease alpha subunit family. As to quaternary structure, heterotrimer of UreA (gamma), UreB (beta) and UreC (alpha) subunits. Three heterotrimers associate to form the active enzyme. The cofactor is Ni cation. Post-translationally, carboxylation allows a single lysine to coordinate two nickel ions.

The protein localises to the cytoplasm. The catalysed reaction is urea + 2 H2O + H(+) = hydrogencarbonate + 2 NH4(+). The protein operates within nitrogen metabolism; urea degradation; CO(2) and NH(3) from urea (urease route): step 1/1. The chain is Urease subunit alpha from Herpetosiphon aurantiacus (strain ATCC 23779 / DSM 785 / 114-95).